Reading from the N-terminus, the 552-residue chain is Urocanate hydratase (552 aa).

NAD(+)-binding positions include 49–50 (GG), Q127, 173–175 (GMG), D193, 239–240 (NA), 260–264 (QTSAH), 270–271 (YI), and Y319. Residue C407 is part of the active site. G489 lines the NAD(+) pocket.

This sequence belongs to the urocanase family. It depends on NAD(+) as a cofactor.

It localises to the cytoplasm. It catalyses the reaction 4-imidazolone-5-propanoate = trans-urocanate + H2O. Its pathway is amino-acid degradation; L-histidine degradation into L-glutamate; N-formimidoyl-L-glutamate from L-histidine: step 2/3. Its function is as follows. Catalyzes the conversion of urocanate to 4-imidazolone-5-propionate. This Bacillus cereus (strain B4264) protein is Urocanate hydratase.